The chain runs to 68 residues: ATP synthase protein 8 (68 aa).

Residues Val8–Met24 form a helical membrane-spanning segment. N6-acetyllysine; alternate is present on Lys54. Lys54 is modified (N6-succinyllysine; alternate). Position 57 is an N6-acetyllysine (Lys57).

It belongs to the ATPase protein 8 family. In terms of assembly, F-type ATPases have 2 components, CF(1) - the catalytic core - and CF(0) - the membrane proton channel. Component of an ATP synthase complex composed of ATP5PB, ATP5MC1, ATP5F1E, ATP5PD, ATP5ME, ATP5PF, ATP5MF, MT-ATP6, MT-ATP8, ATP5F1A, ATP5F1B, ATP5F1D, ATP5F1C, ATP5PO, ATP5MG, ATP5MK and ATP5MJ. Interacts with PRICKLE3.

Its subcellular location is the mitochondrion membrane. In terms of biological role, mitochondrial membrane ATP synthase (F(1)F(0) ATP synthase or Complex V) produces ATP from ADP in the presence of a proton gradient across the membrane which is generated by electron transport complexes of the respiratory chain. F-type ATPases consist of two structural domains, F(1) - containing the extramembraneous catalytic core and F(0) - containing the membrane proton channel, linked together by a central stalk and a peripheral stalk. During catalysis, ATP synthesis in the catalytic domain of F(1) is coupled via a rotary mechanism of the central stalk subunits to proton translocation. Part of the complex F(0) domain. Minor subunit located with subunit a in the membrane. The sequence is that of ATP synthase protein 8 (MT-ATP8) from Hylobates lar (Lar gibbon).